Consider the following 356-residue polypeptide: Aminodeoxyfutalosine deaminase (356 aa).

Zn(2+) contacts are provided by His-18 and His-20. Substrate is bound by residues Arg-73, Glu-140, and Gly-172. His-199 serves as a coordination point for Zn(2+). Glu-202 (proton donor) is an active-site residue. Asp-287 lines the Zn(2+) pocket.

This sequence belongs to the metallo-dependent hydrolases superfamily. Adenosine and AMP deaminases family. It depends on Zn(2+) as a cofactor.

It carries out the reaction 6-amino-6-deoxyfutalosine + H2O + H(+) = futalosine + NH4(+). The protein operates within quinol/quinone metabolism; menaquinone biosynthesis. Its function is as follows. Catalyzes the deamination of aminodeoxyfutalosine (AFL) into futalosine (FL), a step in the biosynthesis of menaquinone (MK, vitamin K2). Is very poorly efficient on 1-(6-amino-9H-purin-9-yl)-1-deoxy-N-ethyl-beta-D-ribofuranuronamide (NECA), adenosine, 5'-methylthioadenosine, 5'-deoxyadenosine, 2'-deoxyadenosine, and AMP as substrate. This chain is Aminodeoxyfutalosine deaminase, found in Acidothermus cellulolyticus (strain ATCC 43068 / DSM 8971 / 11B).